The sequence spans 147 residues: Ubiquitin-conjugating enzyme E2 4 (147 aa).

The UBC core domain maps to 1–147; that stretch reads MSLKRINKEL…AKEWTKKYAV (147 aa). C85 acts as the Glycyl thioester intermediate in catalysis.

It belongs to the ubiquitin-conjugating enzyme family.

The enzyme catalyses S-ubiquitinyl-[E1 ubiquitin-activating enzyme]-L-cysteine + [E2 ubiquitin-conjugating enzyme]-L-cysteine = [E1 ubiquitin-activating enzyme]-L-cysteine + S-ubiquitinyl-[E2 ubiquitin-conjugating enzyme]-L-cysteine.. It participates in protein modification; protein ubiquitination. Its function is as follows. E2 ubiquitin-conjugating enzyme that catalyzes the covalent attachment of ubiquitin to other proteins. Mediates the selective degradation of short-lived and abnormal proteins. Mediates ubiquitination of PEX5. This chain is Ubiquitin-conjugating enzyme E2 4 (UBC4), found in Candida albicans (Yeast).